The following is a 206-amino-acid chain: Shieldin complex subunit 1 (206 aa).

The segment at 27–94 (SSYEASQRVS…GQLETNEEED (68 aa)) is disordered. A compositionally biased stretch (low complexity) spans 32–55 (SQRVSQGSSNSLSSLESHPFLSSS). Residues 56–74 (TTDPDSNSLNTEQKGSWDS) are compositionally biased toward polar residues.

In terms of assembly, component of the shieldin complex, consisting of SHLD1, SHLD2, SHLD3 and MAD2L2/REV7. Within the complex, SHLD2 forms a scaffold which interacts with a SHLD3-MAD2L2 subcomplex via its N-terminus, and with SHLD1 via its C-terminus. Interacts with ASTE1.

The protein localises to the chromosome. In terms of biological role, component of the shieldin complex, which plays an important role in repair of DNA double-stranded breaks (DSBs). During G1 and S phase of the cell cycle, the complex functions downstream of TP53BP1 to promote non-homologous end joining (NHEJ) and suppress DNA end resection. Mediates various NHEJ-dependent processes including immunoglobulin class-switch recombination, and fusion of unprotected telomeres. This is Shieldin complex subunit 1 from Mus musculus (Mouse).